A 565-amino-acid polypeptide reads, in one-letter code: NAD-dependent malic enzyme (565 aa).

Catalysis depends on Y104, which acts as the Proton donor. R157 is a binding site for NAD(+). The active-site Proton acceptor is K175. A divalent metal cation is bound by residues E246, D247, and D270. 2 residues coordinate NAD(+): D270 and N418.

This sequence belongs to the malic enzymes family. In terms of assembly, homotetramer. Mg(2+) serves as cofactor. The cofactor is Mn(2+).

The enzyme catalyses (S)-malate + NAD(+) = pyruvate + CO2 + NADH. It carries out the reaction oxaloacetate + H(+) = pyruvate + CO2. The protein is NAD-dependent malic enzyme of Pectobacterium atrosepticum (strain SCRI 1043 / ATCC BAA-672) (Erwinia carotovora subsp. atroseptica).